Here is a 521-residue protein sequence, read N- to C-terminus: Protein translocase subunit SecD (521 aa).

Helical transmembrane passes span 8–28, 359–379, 388–408, 410–430, 459–479, and 483–503; these read LKLASVLGVCLLGLLLCLPNG, AGILSLGVGFLLVVVFMVLFY, IALLANLVLMVAILSLFEATL, LPGMAGMLLTLGMAVDANILI, IVDSNATAFLAHVMLFVFGTG, and GFALTITIGIATTLFTTLLLS.

This sequence belongs to the SecD/SecF family. SecD subfamily. Forms a complex with SecF. Part of the essential Sec protein translocation apparatus which comprises SecA, SecYEG and auxiliary proteins SecDF-YajC and YidC.

It is found in the cell inner membrane. Functionally, part of the Sec protein translocase complex. Interacts with the SecYEG preprotein conducting channel. SecDF uses the proton motive force (PMF) to complete protein translocation after the ATP-dependent function of SecA. This Acetobacter pasteurianus (strain NBRC 105184 / IFO 3283-01) protein is Protein translocase subunit SecD.